The primary structure comprises 156 residues: Ribosome maturation factor RimP (156 aa).

Belongs to the RimP family.

The protein localises to the cytoplasm. Required for maturation of 30S ribosomal subunits. The sequence is that of Ribosome maturation factor RimP from Exiguobacterium sp. (strain ATCC BAA-1283 / AT1b).